Reading from the N-terminus, the 210-residue chain is Transcriptional regulator MxiE (210 aa).

The region spanning 99-199 (YHLVLYLLRT…GFSARELSNI (101 aa)) is the HTH araC/xylS-type domain. DNA-binding regions (H-T-H motif) lie at residues 118–139 (KSLTEHYGVSEAYFRSLCRKAL) and 166–189 (ITSAAMNNGYASTSHFSNEIKTRL).

Functionally, necessary for the secretion of ipa invasins. Probable transcriptional regulatory protein. This chain is Transcriptional regulator MxiE (mxiE), found in Shigella flexneri.